A 1201-amino-acid chain; its full sequence is Kinesin-like protein costa (1201 aa).

One can recognise a Kinesin motor domain in the interval 4–391 (PIQVAVRIFP…LQFAFKVQCV (388 aa)). Positions 23-92 (SFGPTEPKKD…NGNDSGQKDY (70 aa)) are disordered. The span at 28 to 56 (EPKKDAQAVDEGADSKDSEAQVPAAEKDN) shows a compositional bias: basic and acidic residues. Residues 57–75 (PSISETDPNGNAEQDSAAD) show a composition bias toward polar residues. 175-182 (GQRGQGKS) is an ATP binding site. 3 disordered regions span residues 502-536 (AEEP…PDLD), 565-606 (HPKA…GASL), and 618-639 (ASQQ…ESSS). Low complexity predominate over residues 510–521 (SEAANSESPNSD). A phosphoserine mark is found at Ser-599 and Ser-605. Coiled-coil stretches lie at residues 652–821 (AATA…ELVK) and 968–1001 (TKVI…ERVL).

The protein belongs to the TRAFAC class myosin-kinesin ATPase superfamily. Kinesin family. KIF27 subfamily. In terms of assembly, homodimer (Potential). Binds microtubules. Interacts with ci, smo, sgg, CkIalpha and protein kinase A catalytic subunit. Interacts (via kinesin motor domain) with Ubr3. Polyubiquitinated by Ubr3, which leads to proteasomal degradation.

The protein resides in the cytoplasm. The protein localises to the cytoskeleton. Regulates cubitus interruptus (ci) processing by recruiting multiple kinases to promote its efficient phosphorylation. Scaffolds multiple kinases and ci into proximity to promote its hyperphosphorylation, which then targets it for SCFSlimb/proteasome-mediated processing to generate its repressor form. Hh signaling inhibits ci phosphorylation by interfering with the cos-ci-kinases complex formation. Negatively regulates hh-signaling pathways during various processes, including photoreceptor differentiation. May negatively regulate a hh-signaling pathway which functions in the intestinal immune response to bacterial uracil by activating the Duox-dependent production of reactive oxygen species (ROS). The protein is Kinesin-like protein costa (cos) of Drosophila melanogaster (Fruit fly).